The following is a 55-amino-acid chain: Large ribosomal subunit protein bL33 (55 aa).

It belongs to the bacterial ribosomal protein bL33 family.

The chain is Large ribosomal subunit protein bL33 from Maricaulis maris (strain MCS10) (Caulobacter maris).